A 474-amino-acid polypeptide reads, in one-letter code: Bifunctional protein GlmU (474 aa).

Residues 1–232 (MSALDVIIMA…ALQVAGVNSP (232 aa)) form a pyrophosphorylase region. UDP-N-acetyl-alpha-D-glucosamine-binding positions include Lys-23, Gln-78, 83-84 (GT), 105-107 (SGD), Gly-142, Glu-157, and Asn-230. A Mg(2+)-binding site is contributed by Asp-107. Residue Asn-230 participates in Mg(2+) binding. The interval 233–253 (LQLAELERAHQLAQARALMEQ) is linker. The N-acetyltransferase stretch occupies residues 254-474 (GVRLADPARF…WQRPAKLPKA (221 aa)). 2 residues coordinate UDP-N-acetyl-alpha-D-glucosamine: Arg-349 and Lys-367. His-379 (proton acceptor) is an active-site residue. The UDP-N-acetyl-alpha-D-glucosamine site is built by Tyr-382 and Asn-393. Acetyl-CoA is bound by residues Ala-396, 402–403 (NY), Ser-421, Gly-439, and Arg-456. A disordered region spans residues 454-474 (VARGKQVTKENWQRPAKLPKA).

The protein in the N-terminal section; belongs to the N-acetylglucosamine-1-phosphate uridyltransferase family. This sequence in the C-terminal section; belongs to the transferase hexapeptide repeat family. In terms of assembly, homotrimer. The cofactor is Mg(2+).

Its subcellular location is the cytoplasm. The enzyme catalyses alpha-D-glucosamine 1-phosphate + acetyl-CoA = N-acetyl-alpha-D-glucosamine 1-phosphate + CoA + H(+). It catalyses the reaction N-acetyl-alpha-D-glucosamine 1-phosphate + UTP + H(+) = UDP-N-acetyl-alpha-D-glucosamine + diphosphate. Its pathway is nucleotide-sugar biosynthesis; UDP-N-acetyl-alpha-D-glucosamine biosynthesis; N-acetyl-alpha-D-glucosamine 1-phosphate from alpha-D-glucosamine 6-phosphate (route II): step 2/2. It functions in the pathway nucleotide-sugar biosynthesis; UDP-N-acetyl-alpha-D-glucosamine biosynthesis; UDP-N-acetyl-alpha-D-glucosamine from N-acetyl-alpha-D-glucosamine 1-phosphate: step 1/1. It participates in bacterial outer membrane biogenesis; LPS lipid A biosynthesis. Catalyzes the last two sequential reactions in the de novo biosynthetic pathway for UDP-N-acetylglucosamine (UDP-GlcNAc). The C-terminal domain catalyzes the transfer of acetyl group from acetyl coenzyme A to glucosamine-1-phosphate (GlcN-1-P) to produce N-acetylglucosamine-1-phosphate (GlcNAc-1-P), which is converted into UDP-GlcNAc by the transfer of uridine 5-monophosphate (from uridine 5-triphosphate), a reaction catalyzed by the N-terminal domain. In Paracidovorax citrulli (strain AAC00-1) (Acidovorax citrulli), this protein is Bifunctional protein GlmU.